A 544-amino-acid polypeptide reads, in one-letter code: Regulator of G-protein signaling 14 (544 aa).

The segment at 19 to 59 (VSDGELTSTSGSQAQGEGRGSSLSIHSLPSGPSSPFSTDEQ) is disordered. Residues S20, S42, S45, S143, S199, S203, S218, and S286 each carry the phosphoserine modification. A compositionally biased stretch (polar residues) spans 23–58 (ELTSTSGSQAQGEGRGSSLSIHSLPSGPSSPFSTDE). The 118-residue stretch at 67-184 (SFERLLQDPR…VKSPLYQECL (118 aa)) folds into the RGS domain. Residues 191–220 (RPLREPGSSHLGSPDTARKKPKLKPGKSLP) are disordered. The segment at 297 to 424 (RPGKYCCVYL…LHRPGEKQLV (128 aa)) is necessary for interaction with RABGEF1. RBD domains are found at residues 300-371 (KYCC…LENR) and 373-443 (TFQL…LDTL). A disordered region spans residues 449–493 (REASSIPPCRSQGCLPRTQTKDSHLPPLSSSLSVEDASGSTGKRQ). S481 is modified (phosphoserine). The GoLoco domain maps to 497–519 (IEGLVELLNRVQSSGAHDQRGLL).

Interacts with GNAI1, GNAI2 and GNAI3. Interacts with GNAO1. Interacts (via RGS and GoLoco domains) with GNAI1; the interaction occurs in the centrosomes. Interaction with GNAI1 or GNAI3 (via active GTP- or inactive GDP-bound forms) prevents association of RGS14 with centrosomes or nuclear localization. Interacts with RABGEF1; the interactions is GTP-dependent. Interacts with RAP2A; the interactions is GTP-dependent and does not alter its function on G(i) alpha subunits either as GAP or as GDI. Associates with microtubules. Found in a complex with at least BRAF, HRAS, MAP2K1, MAPK3 and RGS14. Interacts with RIC8A (via C-terminus). Interacts (via RBD 1 domain) with HRAS (active GTP-bound form preferentially). Interacts (via RBD domains) with BRAF (via N-terminus); the interaction mediates the formation of a ternary complex with RAF1. Interacts (via RBD domains) with RAF1 (via N-terminus); the interaction mediates the formation of a ternary complex with BRAF. Interacts with KRAS (active GTP-bound form preferentially), MRAS (active GTP-bound form preferentially), NRAS (active GTP-bound form preferentially) and RRAS (active GTP-bound form preferentially). Post-translationally, phosphorylated by PKC. Phosphorylation is increased in presence of forskolin and may enhance the GDI activity on G(i) alpha subunit GNAI1. As to expression, expressed in neurons of the V2 secondary visual cortex area (at protein level). Expressed at high levels in the brain cortex, hippocampus, striatum, thalamus and substantia nigra, in the lung, and spleen. Low expression has been found in heart, liver, skeletal muscle and testis.

It localises to the nucleus. It is found in the PML body. The protein localises to the cytoplasm. The protein resides in the membrane. Its subcellular location is the cell membrane. It localises to the cytoskeleton. It is found in the microtubule organizing center. The protein localises to the centrosome. The protein resides in the spindle. Its subcellular location is the spindle pole. It localises to the cell projection. It is found in the dendrite. The protein localises to the dendritic spine. The protein resides in the postsynaptic density. Regulates G protein-coupled receptor signaling cascades. Inhibits signal transduction by increasing the GTPase activity of G protein alpha subunits, thereby driving them into their inactive GDP-bound form. Besides, modulates signal transduction via G protein alpha subunits by functioning as a GDP-dissociation inhibitor (GDI). Has GDI activity on G(i) alpha subunits GNAI1 and GNAI3, but not on GNAI2 and G(o)-alpha subunit GNAO1. Has GAP activity on GNAI0, GNAI2 and GNAI3. May act as a scaffold integrating G protein and Ras/Raf MAPkinase signaling pathways. Inhibits platelet-derived growth factor (PDGF)-stimulated ERK1/ERK2 phosphorylation; a process depending on its interaction with HRAS and that is reversed by G(i) alpha subunit GNAI1. Acts as a positive modulator of microtubule polymerisation and spindle organization through a G(i)-alpha-dependent mechanism. Plays a role in cell division; required for completion of the first mitotic division of the embryo. Involved in visual memory processing capacity; when overexpressed in the V2 secondary visual cortex area. Involved in hippocampal-based learning and memory; acts as a suppressor of synaptic plasticity in CA2 neurons. Required for the nerve growth factor (NGF)-mediated neurite outgrowth. Involved in stress resistance. The polypeptide is Regulator of G-protein signaling 14 (Rgs14) (Rattus norvegicus (Rat)).